Reading from the N-terminus, the 200-residue chain is Dephospho-CoA kinase (200 aa).

The 197-residue stretch at 4 to 200 (VLALTGGIAT…QLLIKIKEEG (197 aa)) folds into the DPCK domain. 12–17 (ATGKST) lines the ATP pocket.

It belongs to the CoaE family.

Its subcellular location is the cytoplasm. The catalysed reaction is 3'-dephospho-CoA + ATP = ADP + CoA + H(+). It participates in cofactor biosynthesis; coenzyme A biosynthesis; CoA from (R)-pantothenate: step 5/5. In terms of biological role, catalyzes the phosphorylation of the 3'-hydroxyl group of dephosphocoenzyme A to form coenzyme A. The protein is Dephospho-CoA kinase of Lactobacillus acidophilus (strain ATCC 700396 / NCK56 / N2 / NCFM).